A 528-amino-acid chain; its full sequence is Arginine--tRNA ligase (528 aa).

The 'HIGH' region motif lies at 112–122 (ANPTGPLHIGH).

It belongs to the class-I aminoacyl-tRNA synthetase family. In terms of assembly, monomer.

The protein localises to the cytoplasm. The enzyme catalyses tRNA(Arg) + L-arginine + ATP = L-arginyl-tRNA(Arg) + AMP + diphosphate. This is Arginine--tRNA ligase from Wolinella succinogenes (strain ATCC 29543 / DSM 1740 / CCUG 13145 / JCM 31913 / LMG 7466 / NCTC 11488 / FDC 602W) (Vibrio succinogenes).